The sequence spans 399 residues: Alpha-ketoglutarate-dependent dioxygenase fc-dox (399 aa).

H158 and D160 together coordinate Fe cation. T203 serves as a coordination point for 2-oxoglutarate. Residue H355 participates in Fe cation binding. R367 provides a ligand contact to 2-oxoglutarate. The segment at 371-399 is disordered; the sequence is QGWLAGDRPPKGPVPIPDPRARSSIYYQK.

This sequence belongs to the TfdA dioxygenase family. Requires Fe(2+) as cofactor.

Its pathway is mycotoxin biosynthesis. Functionally, alpha-ketoglutarate-dependent dioxygenase; part of the 2 gene clusters that mediate the biosynthesis of fusicoccins, diterpene glucosides that display phytohormone-like activity and function as potent activators of plasma membrane H(+)-ATPases in plants by modifying 14-3-3 proteins and cause the plant disease constriction canker. The first step in the pathway is performed by the fusicoccadiene synthase PaFS that possesses both prenyl transferase and terpene cyclase activity, converting isopentenyl diphosphate and dimethylallyl diphosphate into geranylgeranyl diphosphate (GGDP) and successively converting GGDP into fusicocca-2,10(14)-diene, a precursor for fusicoccin H. The second step is the oxidation at the C-8 position by the cytochrome P450 monooxygenase PaP450-2 to yield fusicocca-2,10(14)-diene-8-beta-ol. The cytochrome P450 monooxygenase PaP450-1 then catalyzes the hydroxylation at the C-16 position to produce fusicocca-2,10(14)-diene-8-beta,16-diol. The dioxygenase fc-dox then catalyzes the 16-oxydation of fusicocca-2,10(14)-diene-8-beta,16-diol to yield an aldehyde (8-beta-hydroxyfusicocca-1,10(14)-dien-16-al). The short-chain dehydrogenase/reductase fc-sdr catalyzes the reduction of the aldehyde to yield fusicocca-1,10(14)-diene-8-beta,16-diol. The next step is the hydroxylation at C-9 performed by the cytochrome P450 monooxygenase PaP450-3 that leads to fusicoccin H aglycon which is glycosylated to fusicoccin H by the O-glycosyltransferase PaGT. Hydroxylation at C-12 by the cytochrome P450 monooxygenase PaP450-4 leads then to the production of fusicoccin Q and is followed by methylation by the O-methyltransferase PaMT to yield fusicoccin P. Fusicoccin P is further converted to fusicoccin J via prenylation by the O-glucose prenyltransferase PaPT. Cytochrome P450 monooxygenase PaP450-5 then performs hydroxylation at C-19 to yield dideacetyl-fusicoccin A which is acetylated to 3'-O-deacetyl-fusicoccin A by the O-acetyltransferase PaAT-2. Finally, a another acetylation by the O-acetyltransferase PaAT-1 yields fusicoccin A. The sequence is that of Alpha-ketoglutarate-dependent dioxygenase fc-dox from Phomopsis amygdali (Fusicoccum amygdali).